Consider the following 251-residue polypeptide: Ribonuclease 3 (251 aa).

In terms of domain architecture, RNase III spans 3–125 (LATLETRLGH…LFGAVFLDAG (123 aa)). Glu38 contributes to the Mg(2+) binding site. Residue Asp42 is part of the active site. Asp111 and Glu114 together coordinate Mg(2+). Glu114 is an active-site residue. The DRBM domain occupies 152-222 (DAKTLLQEFL…AKLALEAALV (71 aa)).

It belongs to the ribonuclease III family. In terms of assembly, homodimer. It depends on Mg(2+) as a cofactor.

The protein localises to the cytoplasm. It catalyses the reaction Endonucleolytic cleavage to 5'-phosphomonoester.. Digests double-stranded RNA. Involved in the processing of primary rRNA transcript to yield the immediate precursors to the large and small rRNAs (23S and 16S). Processes some mRNAs, and tRNAs when they are encoded in the rRNA operon. Processes pre-crRNA and tracrRNA of type II CRISPR loci if present in the organism. This is Ribonuclease 3 from Bordetella avium (strain 197N).